A 379-amino-acid polypeptide reads, in one-letter code: Odorant receptor 23a (379 aa).

At 1–36 (MKLSETLKIDYFRVQLNAWRICGALDLSEGRYWSWS) the chain is on the cytoplasmic side. The helical transmembrane segment at 37 to 57 (MLLCILVYLPTPMLLRGVYSF) threads the bilayer. Topologically, residues 58-64 (EDPVENN) are extracellular. Residue asparagine 64 is glycosylated (N-linked (GlcNAc...) asparagine). The helical transmembrane segment at 65 to 85 (FSLSLTVTSLSNLMKFCMYVA) threads the bilayer. Over 86–125 (QLTKMVEVQSLIGQLDARVSGESQSERHRNMTEHLLRMSK) the chain is Cytoplasmic. The helical transmembrane segment at 126-146 (LFQITYAVVFIIAAVPFVFET) threads the bilayer. The Extracellular segment spans residues 147 to 162 (ELSLPMPMWFPFDWKN). A helical transmembrane segment spans residues 163–183 (SMVAYIGALVFQEIGYVFQIM). Residues 184–253 (QCFAADSFPP…TKSLVSYPMM (70 aa)) lie on the Cytoplasmic side of the membrane. The chain crosses the membrane as a helical span at residues 254–274 (VQFMVIGINIAITLFVLIFYV). The Extracellular portion of the chain corresponds to 275–280 (ETLYDR). A helical transmembrane segment spans residues 281–301 (IYYLCFLLGITVQTYPLCYYG). Residues 302-340 (TMVQESFAELHYAVFCSNWVDQSASYRGHMLILAERTKR) are Cytoplasmic-facing. Residues 341 to 361 (MQLLLAGNLVPIHLSTYVACW) traverse the membrane as a helical segment. The Extracellular portion of the chain corresponds to 362 to 379 (KGAYSFFTLMADRDGLGS).

It belongs to the insect chemoreceptor superfamily. Heteromeric odorant receptor channel (TC 1.A.69) family. Or2a subfamily. Interacts with Orco. Complexes exist early in the endomembrane system in olfactory sensory neurons (OSNs), coupling these complexes to the conserved ciliary trafficking pathway. Expressed in 10-40 sensory cells in the third antenna segment and in the maxillary palp.

It is found in the cell membrane. Odorant receptor which mediates acceptance or avoidance behavior, depending on its substrates. The odorant receptor repertoire encodes a large collection of odor stimuli that vary widely in identity, intensity, and duration. May form a complex with Orco to form odorant-sensing units, providing sensitive and prolonged odorant signaling and calcium permeability. The chain is Odorant receptor 23a (Or23a) from Drosophila melanogaster (Fruit fly).